The primary structure comprises 286 residues: MKNILSIQSHVVFGHAGNSAAEFPMRRMGVNVWPLNTVQFSNHTQYGHWTGCVMPASHLTDIVQGIADIDRLKDCDAVLSGYIGSPEQGSHILAAVAQVKQANPDAWYFCDPVMGHPEKGCIVAPGVAEFFCNEALPASDMIAPNLLELEQLSGERVENVEQAVQVARSLCARGPKVVLVKHLSRAGYHADCFEMLLVTADDAWHISRPLVDFGKRQPVGVGDLTSGLLLVNLLKGEPLDKALEHVTAAVYEVMLKTQEMGEYELQVVAAQETIVTPICQFTAVRL.

Substrate is bound by residues S9 and 44–45 (TQ). ATP is bound by residues D111, A143, E148, K181, and 208–211 (RPLV). Position 223 (D223) interacts with substrate.

Belongs to the pyridoxine kinase family. PdxY subfamily. As to quaternary structure, homodimer. Requires Mg(2+) as cofactor.

It catalyses the reaction pyridoxal + ATP = pyridoxal 5'-phosphate + ADP + H(+). It functions in the pathway cofactor metabolism; pyridoxal 5'-phosphate salvage; pyridoxal 5'-phosphate from pyridoxal: step 1/1. In terms of biological role, pyridoxal kinase involved in the salvage pathway of pyridoxal 5'-phosphate (PLP). Catalyzes the phosphorylation of pyridoxal to PLP. The chain is Pyridoxal kinase PdxY from Yersinia pseudotuberculosis serotype I (strain IP32953).